The sequence spans 163 residues: ATP synthase subunit b 2 (163 aa).

The chain crosses the membrane as a helical span at residues 5–25 (SLATLWATIALIIFLGVAIYI).

The protein belongs to the ATPase B chain family. F-type ATPases have 2 components, F(1) - the catalytic core - and F(0) - the membrane proton channel. F(1) has five subunits: alpha(3), beta(3), gamma(1), delta(1), epsilon(1). F(0) has three main subunits: a(1), b(2) and c(10-14). The alpha and beta chains form an alternating ring which encloses part of the gamma chain. F(1) is attached to F(0) by a central stalk formed by the gamma and epsilon chains, while a peripheral stalk is formed by the delta and b chains.

The protein localises to the cell inner membrane. Its function is as follows. F(1)F(0) ATP synthase produces ATP from ADP in the presence of a proton or sodium gradient. F-type ATPases consist of two structural domains, F(1) containing the extramembraneous catalytic core and F(0) containing the membrane proton channel, linked together by a central stalk and a peripheral stalk. During catalysis, ATP synthesis in the catalytic domain of F(1) is coupled via a rotary mechanism of the central stalk subunits to proton translocation. Functionally, component of the F(0) channel, it forms part of the peripheral stalk, linking F(1) to F(0). In Mesorhizobium japonicum (strain LMG 29417 / CECT 9101 / MAFF 303099) (Mesorhizobium loti (strain MAFF 303099)), this protein is ATP synthase subunit b 2.